We begin with the raw amino-acid sequence, 559 residues long: Potassium-transporting ATPase potassium-binding subunit (559 aa).

12 helical membrane passes run 5–25 (GFLL…PLGM), 63–83 (LLAI…LLML), 131–151 (VGLT…VFAL), 173–193 (ITLW…IQQG), 254–274 (VQML…GEVV), 282–302 (AILW…MWAE), 327–347 (FGIL…CGAV), 356–376 (ALGG…FGGV), 379–399 (GLYG…LMVG), 416–436 (MIAL…ALAM), 483–503 (LLLA…VMAI), and 525–545 (ALFI…TFIP).

It belongs to the KdpA family. As to quaternary structure, the system is composed of three essential subunits: KdpA, KdpB and KdpC.

Its subcellular location is the cell inner membrane. In terms of biological role, part of the high-affinity ATP-driven potassium transport (or Kdp) system, which catalyzes the hydrolysis of ATP coupled with the electrogenic transport of potassium into the cytoplasm. This subunit binds the periplasmic potassium ions and delivers the ions to the membrane domain of KdpB through an intramembrane tunnel. This is Potassium-transporting ATPase potassium-binding subunit from Klebsiella pneumoniae subsp. pneumoniae (strain ATCC 700721 / MGH 78578).